Here is a 250-residue protein sequence, read N- to C-terminus: MADS-box protein J2 (250 aa).

Residues Met-1 to Ser-61 enclose the MADS-box domain. In terms of domain architecture, K-box spans Thr-87–Arg-177.

The protein localises to the nucleus. In terms of biological role, MADS-box transcription factor that acts redundantly with EJ2 to control meristem maturation and inflorescence architecture. The sequence is that of MADS-box protein J2 from Solanum lycopersicum (Tomato).